The sequence spans 308 residues: Isoaspartyl peptidase/L-asparaginase (308 aa).

Position 1 is an N-acetylmethionine (Met1). Thr168 (nucleophile) is an active-site residue. Substrate is bound by residues 196–199 (RVGD) and 219–222 (TGHG).

This sequence belongs to the Ntn-hydrolase family. Heterodimer of an alpha and beta chain produced by autocleavage. This heterodimer may then dimerize in turn, giving rise to a heterotetramer. Cleaved into an alpha and beta chain by autocatalysis; this activates the enzyme. The N-terminal residue of the beta subunit is responsible for the nucleophile hydrolase activity.

It is found in the cytoplasm. It carries out the reaction L-asparagine + H2O = L-aspartate + NH4(+). The catalysed reaction is Cleavage of a beta-linked Asp residue from the N-terminus of a polypeptide.. Its function is as follows. Has both L-asparaginase and beta-aspartyl peptidase activity. May be involved in the production of L-aspartate, which can act as an excitatory neurotransmitter in some brain regions. Is highly active with L-Asp beta-methyl ester. Besides, has catalytic activity toward beta-aspartyl dipeptides and their methyl esters, including beta-L-Asp-L-Phe, beta-L-Asp-L-Phe methyl ester (aspartame), beta-L-Asp-L-Ala, beta-L-Asp-L-Leu and beta-L-Asp-L-Lys. Does not have aspartylglucosaminidase activity and is inactive toward GlcNAc-L-Asn. Likewise, has no activity toward glutamine. In Macaca fascicularis (Crab-eating macaque), this protein is Isoaspartyl peptidase/L-asparaginase (ASRGL1).